Here is a 160-residue protein sequence, read N- to C-terminus: Cyclic pyranopterin monophosphate synthase (160 aa).

Residues 73 to 75 (LCH) and 110 to 111 (ME) each bind substrate. Residue Asp125 is part of the active site.

This sequence belongs to the MoaC family. Homohexamer; trimer of dimers.

It catalyses the reaction (8S)-3',8-cyclo-7,8-dihydroguanosine 5'-triphosphate = cyclic pyranopterin phosphate + diphosphate. It functions in the pathway cofactor biosynthesis; molybdopterin biosynthesis. Catalyzes the conversion of (8S)-3',8-cyclo-7,8-dihydroguanosine 5'-triphosphate to cyclic pyranopterin monophosphate (cPMP). The chain is Cyclic pyranopterin monophosphate synthase from Pseudomonas paraeruginosa (strain DSM 24068 / PA7) (Pseudomonas aeruginosa (strain PA7)).